The primary structure comprises 253 residues: Ubiquinone biosynthesis O-methyltransferase (253 aa).

S-adenosyl-L-methionine contacts are provided by Arg-47, Gly-78, Asp-99, and Met-141.

The protein belongs to the methyltransferase superfamily. UbiG/COQ3 family.

It catalyses the reaction a 3-demethylubiquinol + S-adenosyl-L-methionine = a ubiquinol + S-adenosyl-L-homocysteine + H(+). It carries out the reaction a 3-(all-trans-polyprenyl)benzene-1,2-diol + S-adenosyl-L-methionine = a 2-methoxy-6-(all-trans-polyprenyl)phenol + S-adenosyl-L-homocysteine + H(+). It participates in cofactor biosynthesis; ubiquinone biosynthesis. O-methyltransferase that catalyzes the 2 O-methylation steps in the ubiquinone biosynthetic pathway. This chain is Ubiquinone biosynthesis O-methyltransferase, found in Bradyrhizobium diazoefficiens (strain JCM 10833 / BCRC 13528 / IAM 13628 / NBRC 14792 / USDA 110).